The sequence spans 460 residues: A-type ATP synthase subunit B (460 aa).

The protein belongs to the ATPase alpha/beta chains family. As to quaternary structure, has multiple subunits with at least A(3), B(3), C, D, E, F, H, I and proteolipid K(x).

It localises to the cell membrane. In terms of biological role, component of the A-type ATP synthase that produces ATP from ADP in the presence of a proton gradient across the membrane. The B chain is a regulatory subunit. This is A-type ATP synthase subunit B from Methanosarcina acetivorans (strain ATCC 35395 / DSM 2834 / JCM 12185 / C2A).